The primary structure comprises 250 residues: Triosephosphate isomerase (250 aa).

Residue 8-10 coordinates substrate; that stretch reads NWK. Histidine 93 serves as the catalytic Electrophile. The active-site Proton acceptor is the glutamate 165. Substrate contacts are provided by glycine 171 and serine 211.

It belongs to the triosephosphate isomerase family. Homodimer.

It localises to the cytoplasm. The enzyme catalyses D-glyceraldehyde 3-phosphate = dihydroxyacetone phosphate. It participates in carbohydrate biosynthesis; gluconeogenesis. The protein operates within carbohydrate degradation; glycolysis; D-glyceraldehyde 3-phosphate from glycerone phosphate: step 1/1. Its function is as follows. Involved in the gluconeogenesis. Catalyzes stereospecifically the conversion of dihydroxyacetone phosphate (DHAP) to D-glyceraldehyde-3-phosphate (G3P). The protein is Triosephosphate isomerase of Malacoplasma penetrans (strain HF-2) (Mycoplasma penetrans).